Consider the following 101-residue polypeptide: Small ribosomal subunit protein uS10 (101 aa).

Belongs to the universal ribosomal protein uS10 family. In terms of assembly, part of the 30S ribosomal subunit.

Involved in the binding of tRNA to the ribosomes. The sequence is that of Small ribosomal subunit protein uS10 from Cytophaga hutchinsonii (strain ATCC 33406 / DSM 1761 / CIP 103989 / NBRC 15051 / NCIMB 9469 / D465).